The primary structure comprises 91 residues: MIDKVKSPLLTEKSIRLLQKNQYTFQVNSDVNKTEFKKWIEIFFKVKVMSINSCRPPRKKKRIGLISGYTVRYKKIIVTLKSGDSIPLFSI.

It belongs to the universal ribosomal protein uL23 family. Part of the 50S ribosomal subunit.

It localises to the plastid. The protein localises to the chloroplast. Binds to 23S rRNA. The sequence is that of Large ribosomal subunit protein uL23c (rpl23) from Chaetosphaeridium globosum (Charophycean green alga).